Here is a 1847-residue protein sequence, read N- to C-terminus: MEQLTTLPRLGDPGAMEPWALPAWQHWTQGQGCKPGDASASIAATPTALQVKGLRFEESSEPAGAHSPGPIRNTDPEGTETVLPKLGQQAESPGYSCSRLEGEDAQAYKAKFNIGFGDRPNLELLRALGELQQHCTILKEENQMLRKSSFPETEEKVRRLKRKNAELAVIAKRLEERAQKLQETNMRGGEVPLCPDPDPVWSCARKALARQRARDLSETATALLAKDKQNAALQRECRELQARLSLVGKEGPQWLHMRDFDRLLRESQREVLRLQRQIALRNQREPLRPARSQGSTAPSSVGAPAPGAPGETVLEDDVESPQVVLGEPEKQLRVQQLESELCKKRKKCESLEQEARKKQRRCEELELQLRAAQNENARLVEENSRLSGKATEKEQVEWENAELKGQLLGVTQERDSALRKSQGLQSKLESLEQVLEHMRKVAQRRQQLEEEHEQARLSLQEKQEEVRRLQQAQAEAKREHEGAVQLLESTLDSMQARVRELEGQCRSQTERFSLLAQELQAFRLHPGPLDLLTSALGCNALGDHPPPHCCCSSPQPCQGSGPKDLDLPPGSPGRCTPKSSEPALATLTGVPRRTAKKAESLSNSSRSESIHNSPKSCPTPEVDTASEVEELEVDSVSLLPAAPEGHSGGGARIQVFLARYSYNPFEGPNENPEAELPLTAGEYIYIYGNMDEDGFFEGELMDGRRGLVPSNFVERVSDDDLLSTLPRELADSSHSSGPELSFLSGGGGGCSSGGQSSGGRSQPRPEEEATGDELSLSPPPEGLGEPLAVPYPRHITVLKQLAHSVVLAWELPPERVDLRGFHIFVNGELRQALGPGVPPKAVLENMDLRAGPLHVSVQALTSKGSSDPLRCCLAMGAGAGVVPSQLRIHRLTATSAEITWVPGNSNLAHAVYLNGEECPPARPSTYWATFCNLRPGTLYQARVEAQIPSQGPWEPGWERPELRAATLQFTTLPAGLPDAPLDVQAEPGPSPGIVMISWLPVTIDAAGTSNGVRVTGYAVYADGQKIMEVASPTAGSVLVEVSQLQLLQACHEVTVRTMSPHGESTDSIPAPVAPALASACQPARMSCLSPRPSPEVRTPLASVSPGLGYTSLPLRHPVPHGTQDSPASLSTEMSKGPQEEPPVPCSQEEAGSAVHRTSEEKRAMEPTLGQEGPDPVAPFLAKQAVECTSGDAGPTPCSTQEELTQKEPSTEVCHRGDLDSELKLRSEKEGMSELGVHLVNSLVDHSRNSDLSDIQEEEEEEEEEEELGSRPWSFQKQVAGNSIGENGAKPQPDPSCETDSDEEILEQILELPLQRLCSKKLFSIPEEEEEEDEEEGLGKPGPSSSSQDPSQPERALLGLDCESSQPQGPGLCPLSPELSGAREHLEDVLGVVGGNSRRRGGCSPEKLPNRKRPQDPREHCSRLLGNGGPQTSARPVPPRDRGSLPVIEGTRVGQEPGGRGRPGLSRRCPRGPAPESSLVSCLSPKCLEISIEYDSEDEQEVGSGGVSISSSCYPTDGEAWGTAAVGRPRGPVKVNSGSNTYLRLPAWEKGEPERRGRSAIGRTKEPPSRATETGESRGQDNSGRRGPQRRGARVLRTGTTELAPPRSPQEAPSHQDLPLRVFVALFDYDPISMSPNPDAGEEELPFREGQILKVFGDKDADGFYRGESGGRTGYIPCNMVAEVAVDTPTGRQQLLQRGFLPPNVLTQGSGNGPSVYPSAHTPGPPPKPRRSKKVELEDPAQLCPGPPKLIHSAALKTSRPMVAAFDYNPRENSPNMDVEAELPFRAGDVITVFGNMDDDGFYYGELNGQRGLVPSNFLEGPGPEAGGLDSGTSQAESQRTRRRRVQC.

Disordered regions lie at residues 57–81, 282–318, and 560–626; these read EESS…GTET, NQRE…EDDV, and SGPK…DTAS. Low complexity-rich tracts occupy residues 294–310 and 600–613; these read GSTA…GAPG and SLSN…IHNS. One can recognise an SH3 1 domain in the interval 651–718; that stretch reads ARIQVFLARY…PSNFVERVSD (68 aa). A disordered region spans residues 728 to 787; that stretch reads ELADSSHSSGPELSFLSGGGGGCSSGGQSSGGRSQPRPEEEATGDELSLSPPPEGLGEPL. Positions 744 to 757 are enriched in gly residues; that stretch reads SGGGGGCSSGGQSS. Fibronectin type-III domains follow at residues 789–880, 882–974, and 979–1077; these read VPYP…AGAG, VPSQ…TLPA, and APLD…PALA. Disordered stretches follow at residues 1107 to 1174, 1191 to 1215, 1240 to 1307, 1322 to 1478, and 1514 to 1616; these read LGYT…EGPD, DAGP…VCHR, NSLV…ILEQ, FSIP…ESSL, and PTDG…SHQD. Polar residues predominate over residues 1122–1133; it reads TQDSPASLSTEM. Basic and acidic residues predominate over residues 1203 to 1215; that stretch reads LTQKEPSTEVCHR. Positions 1253–1266 are enriched in acidic residues; it reads DIQEEEEEEEEEEE. The span at 1272 to 1284 shows a compositional bias: polar residues; the sequence is WSFQKQVAGNSIG. 2 stretches are compositionally biased toward acidic residues: residues 1296-1305 and 1325-1335; these read CETDSDEEIL and PEEEEEEDEEE. Over residues 1340–1352 the composition is skewed to low complexity; sequence PGPSSSSQDPSQP. Basic and acidic residues-rich tracts occupy residues 1412-1421 and 1546-1578; these read RPQDPREHCS and AWEK…ESRG. Residues 1617–1685 enclose the SH3 2 domain; it reads LPLRVFVALF…PCNMVAEVAV (69 aa). 2 disordered regions span residues 1701-1747 and 1818-1847; these read PPNV…PGPP and LEGP…RVQC. Residues 1756-1823 enclose the SH3 3 domain; that stretch reads KTSRPMVAAF…PSNFLEGPGP (68 aa).

The protein belongs to the RIMBP family. In terms of assembly, interacts with RIMS1 and RIMS2. Interacts with TSPO. Interacts with CACNA1A. In terms of tissue distribution, specifically expressed in brain. High expression level in the limbic system such as the nucleus accumbens, septum, and hippocampus, as well as on the cerebellum and pineal gland. Abundant in the CA1 region of the hippocampus.

It is found in the cytoplasm. The protein resides in the mitochondrion. In terms of biological role, required for synaptic transmission regulation. It probably controls the recruitement of voltage-gated calcium channels to the presynaptic membrane, and modulates neurotransmitter release. This chain is Peripheral-type benzodiazepine receptor-associated protein 1, found in Rattus norvegicus (Rat).